A 107-amino-acid polypeptide reads, in one-letter code: NADH-quinone oxidoreductase subunit K (107 aa).

The next 3 membrane-spanning stretches (helical) occupy residues 9–29 (IGVN…MFAV), 36–56 (IVIL…FLTF), and 68–88 (FSLF…AIVI).

The protein belongs to the complex I subunit 4L family. NDH-1 is composed of 14 different subunits. Subunits NuoA, H, J, K, L, M, N constitute the membrane sector of the complex.

It is found in the cell inner membrane. The enzyme catalyses a quinone + NADH + 5 H(+)(in) = a quinol + NAD(+) + 4 H(+)(out). NDH-1 shuttles electrons from NADH, via FMN and iron-sulfur (Fe-S) centers, to quinones in the respiratory chain. The immediate electron acceptor for the enzyme in this species is believed to be a menaquinone. Couples the redox reaction to proton translocation (for every two electrons transferred, four hydrogen ions are translocated across the cytoplasmic membrane), and thus conserves the redox energy in a proton gradient. The chain is NADH-quinone oxidoreductase subunit K from Chlorobaculum tepidum (strain ATCC 49652 / DSM 12025 / NBRC 103806 / TLS) (Chlorobium tepidum).